Here is a 435-residue protein sequence, read N- to C-terminus: D-aminoacyl-tRNA deacylase (435 aa).

Belongs to the DtdA deacylase family. In terms of assembly, monomer. Zn(2+) is required as a cofactor.

It carries out the reaction a D-aminoacyl-tRNA + H2O = a tRNA + a D-alpha-amino acid + H(+). The enzyme catalyses glycyl-tRNA(Ala) + H2O = tRNA(Ala) + glycine + H(+). In terms of biological role, D-aminoacyl-tRNA deacylase with broad substrate specificity. By recycling D-aminoacyl-tRNA to D-amino acids and free tRNA molecules, this enzyme counteracts the toxicity associated with the formation of D-aminoacyl-tRNA entities in vivo. The polypeptide is D-aminoacyl-tRNA deacylase (Methanosphaerula palustris (strain ATCC BAA-1556 / DSM 19958 / E1-9c)).